Reading from the N-terminus, the 42-residue chain is Photosystem I reaction center subunit IX (42 aa).

The helical transmembrane segment at 7–27 (YLSVAPVLSTLWFGILAGLLI) threads the bilayer.

It belongs to the PsaJ family.

Its subcellular location is the plastid. The protein localises to the chloroplast thylakoid membrane. Functionally, may help in the organization of the PsaE and PsaF subunits. This Lemna minor (Common duckweed) protein is Photosystem I reaction center subunit IX.